A 664-amino-acid chain; its full sequence is Degenerin del-1 (664 aa).

The Cytoplasmic portion of the chain corresponds to 1 to 67; the sequence is MARKYIDILK…IFTTSLYWVR (67 aa). Residues 68 to 88 form a helical membrane-spanning segment; sequence FLWVVVSLVCICLCMYSFSHV. Residues 89-607 lie on the Extracellular side of the membrane; that stretch reads KDKYDRKEKI…WFNLMADMGG (519 aa). N-linked (GlcNAc...) asparagine glycosylation is found at N241, N300, N394, N508, and N562. The helical transmembrane segment at 608 to 628 threads the bilayer; the sequence is QAGLFLGASIMSVIEFLFFAV. The Cytoplasmic portion of the chain corresponds to 629-664; it reads RTLGIACKPRRWRQKTELLRAEELNDAEKGVSTNNN.

The protein belongs to the amiloride-sensitive sodium channel (TC 1.A.6) family.

The protein resides in the membrane. Functionally, probable sodium channel subunit. This chain is Degenerin del-1 (del-1), found in Caenorhabditis elegans.